A 235-amino-acid chain; its full sequence is Putative N-acetylmannosamine-6-phosphate 2-epimerase (235 aa).

The protein belongs to the NanE family.

The enzyme catalyses an N-acyl-D-glucosamine 6-phosphate = an N-acyl-D-mannosamine 6-phosphate. Its pathway is amino-sugar metabolism; N-acetylneuraminate degradation; D-fructose 6-phosphate from N-acetylneuraminate: step 3/5. Its function is as follows. Converts N-acetylmannosamine-6-phosphate (ManNAc-6-P) to N-acetylglucosamine-6-phosphate (GlcNAc-6-P). The sequence is that of Putative N-acetylmannosamine-6-phosphate 2-epimerase from Edwardsiella ictaluri (strain 93-146).